A 212-amino-acid chain; its full sequence is Large ribosomal subunit protein uL1 (212 aa).

This sequence belongs to the universal ribosomal protein uL1 family. In terms of assembly, part of the 50S ribosomal subunit.

In terms of biological role, binds directly to 23S rRNA. Probably involved in E site tRNA release. Functionally, protein L1 is also a translational repressor protein, it controls the translation of its operon by binding to its mRNA. This is Large ribosomal subunit protein uL1 from Natronomonas pharaonis (strain ATCC 35678 / DSM 2160 / CIP 103997 / JCM 8858 / NBRC 14720 / NCIMB 2260 / Gabara) (Halobacterium pharaonis).